Here is a 447-residue protein sequence, read N- to C-terminus: Pentatricopeptide repeat-containing protein At3g53170 (447 aa).

PPR repeat units follow at residues 93–127 (RCKT…GLKP), 128–158 (TIDV…MKSV), 164–198 (DVFT…GVGC), 199–233 (STVT…GDSL), 235–269 (DVCT…GVQP), 270–304 (DITT…FFSL), 305–339 (TTVT…GVKP), 340–374 (NSIT…DVVL), 375–409 (DTPF…KCKP), and 410–444 (DKIT…GENL).

This sequence belongs to the PPR family. P subfamily.

The chain is Pentatricopeptide repeat-containing protein At3g53170 from Arabidopsis thaliana (Mouse-ear cress).